The following is an 88-amino-acid chain: Apolipoprotein C-I (88 aa).

Positions Met-1–Ala-26 are cleaved as a signal peptide.

Belongs to the apolipoprotein C1 family.

It localises to the secreted. In terms of biological role, inhibitor of lipoprotein binding to the low density lipoprotein (LDL) receptor, LDL receptor-related protein, and very low density lipoprotein (VLDL) receptor. Associates with high density lipoproteins (HDL) and the triacylglycerol-rich lipoproteins in the plasma and makes up about 10% of the protein of the VLDL and 2% of that of HDL. Appears to interfere directly with fatty acid uptake and is also the major plasma inhibitor of cholesteryl ester transfer protein (CETP). Modulates the interaction of APOE with beta-migrating VLDL and inhibits binding of beta-VLDL to the LDL receptor-related protein. Binds free fatty acids and reduces their intracellular esterification. The chain is Apolipoprotein C-I (APOC1) from Myodes glareolus (Bank vole).